Here is a 298-residue protein sequence, read N- to C-terminus: 4-diphosphocytidyl-2-C-methyl-D-erythritol kinase (298 aa).

The active site involves K25. 109 to 119 (PVGGGFGGGSS) is a binding site for ATP. D151 is an active-site residue.

Belongs to the GHMP kinase family. IspE subfamily.

It catalyses the reaction 4-CDP-2-C-methyl-D-erythritol + ATP = 4-CDP-2-C-methyl-D-erythritol 2-phosphate + ADP + H(+). It functions in the pathway isoprenoid biosynthesis; isopentenyl diphosphate biosynthesis via DXP pathway; isopentenyl diphosphate from 1-deoxy-D-xylulose 5-phosphate: step 3/6. Functionally, catalyzes the phosphorylation of the position 2 hydroxy group of 4-diphosphocytidyl-2C-methyl-D-erythritol. This Xylella fastidiosa (strain 9a5c) protein is 4-diphosphocytidyl-2-C-methyl-D-erythritol kinase.